Consider the following 231-residue polypeptide: Aquaporin Z (231 aa).

Helical transmembrane passes span 9–29 (CFGT…AAGF) and 34–54 (IGFA…AFAV). An NPA 1 motif is present at residues 63–65 (NPA). A run of 3 helical transmembrane segments spans residues 82 to 102 (VGYV…LYLI), 129 to 149 (YSML…LLVI), and 156 to 176 (FAPA…IHLI). Residues 186 to 188 (NPA) carry the NPA 2 motif. A helical membrane pass occupies residues 202 to 222 (LEQLWFFWVVPIVGGIIGGLI).

Belongs to the MIP/aquaporin (TC 1.A.8) family. In terms of assembly, homotetramer.

The protein resides in the cell inner membrane. It catalyses the reaction H2O(in) = H2O(out). In terms of biological role, channel that permits osmotically driven movement of water in both directions. It is involved in the osmoregulation and in the maintenance of cell turgor during volume expansion in rapidly growing cells. It mediates rapid entry or exit of water in response to abrupt changes in osmolarity. This chain is Aquaporin Z, found in Escherichia coli O6:H1 (strain CFT073 / ATCC 700928 / UPEC).